The chain runs to 323 residues: tRNA U34 carboxymethyltransferase (323 aa).

Residues lysine 91, tryptophan 105, lysine 110, glycine 130, aspartate 152 to threonine 154, isoleucine 181 to glutamate 182, methionine 196, tyrosine 200, and arginine 315 contribute to the carboxy-S-adenosyl-L-methionine site.

This sequence belongs to the class I-like SAM-binding methyltransferase superfamily. CmoB family. As to quaternary structure, homotetramer.

The catalysed reaction is carboxy-S-adenosyl-L-methionine + 5-hydroxyuridine(34) in tRNA = 5-carboxymethoxyuridine(34) in tRNA + S-adenosyl-L-homocysteine + H(+). Its function is as follows. Catalyzes carboxymethyl transfer from carboxy-S-adenosyl-L-methionine (Cx-SAM) to 5-hydroxyuridine (ho5U) to form 5-carboxymethoxyuridine (cmo5U) at position 34 in tRNAs. This is tRNA U34 carboxymethyltransferase from Escherichia coli O6:H1 (strain CFT073 / ATCC 700928 / UPEC).